A 462-amino-acid polypeptide reads, in one-letter code: ATP synthase subunit beta 2 (462 aa).

Position 151 to 158 (151 to 158 (GGAGVGKT)) interacts with ATP.

This sequence belongs to the ATPase alpha/beta chains family. As to quaternary structure, F-type ATPases have 2 components, CF(1) - the catalytic core - and CF(0) - the membrane proton channel. CF(1) has five subunits: alpha(3), beta(3), gamma(1), delta(1), epsilon(1). CF(0) has three main subunits: a(1), b(2) and c(9-12). The alpha and beta chains form an alternating ring which encloses part of the gamma chain. CF(1) is attached to CF(0) by a central stalk formed by the gamma and epsilon chains, while a peripheral stalk is formed by the delta and b chains.

It localises to the cell inner membrane. It catalyses the reaction ATP + H2O + 4 H(+)(in) = ADP + phosphate + 5 H(+)(out). Functionally, produces ATP from ADP in the presence of a proton gradient across the membrane. The catalytic sites are hosted primarily by the beta subunits. The protein is ATP synthase subunit beta 2 of Chlorobaculum tepidum (strain ATCC 49652 / DSM 12025 / NBRC 103806 / TLS) (Chlorobium tepidum).